We begin with the raw amino-acid sequence, 161 residues long: Regulator of ribonuclease activity A (161 aa).

This sequence belongs to the RraA family. Homotrimer. Binds to both RNA-binding sites in the C-terminal region of Rne and to RhlB.

It is found in the cytoplasm. Globally modulates RNA abundance by binding to RNase E (Rne) and regulating its endonucleolytic activity. Can modulate Rne action in a substrate-dependent manner by altering the composition of the degradosome. Modulates RNA-binding and helicase activities of the degradosome. This Shewanella oneidensis (strain ATCC 700550 / JCM 31522 / CIP 106686 / LMG 19005 / NCIMB 14063 / MR-1) protein is Regulator of ribonuclease activity A.